A 284-amino-acid polypeptide reads, in one-letter code: MKYVGAHVSASGGLANAAIRAAEIEATAFALFTKNQRQWRAAPLSDETIAEFKAACEKYHFGPGQILPHDSYLINLGHPVEEALEKSRDAFIDEMTRCQQLGLTLLNFHPGSHLQQIPEEECLARIAESINIALAKTEGVTAVIENTAGQGSNLGFKFEHLAAIIDGVEDKSRVGVCIDTCHAFAAGYDLRSAEACEKTFAAFERIVGFQYLRGMHLNDAKSAFGSRVDRHHSLGEGNIGHDCFSWIMQDSRFDGIPLILETINPDIWAEEIAWLRAQQIAEVA.

9 residues coordinate Zn(2+): H69, H109, E145, D179, H182, H216, D229, H231, and E261.

The protein belongs to the AP endonuclease 2 family. Requires Zn(2+) as cofactor.

It carries out the reaction Endonucleolytic cleavage to 5'-phosphooligonucleotide end-products.. In terms of biological role, endonuclease IV plays a role in DNA repair. It cleaves phosphodiester bonds at apurinic or apyrimidinic (AP) sites, generating a 3'-hydroxyl group and a 5'-terminal sugar phosphate. This is Probable endonuclease 4 from Klebsiella pneumoniae subsp. pneumoniae (strain ATCC 700721 / MGH 78578).